The following is a 283-amino-acid chain: Foldase protein PrsA 3 (283 aa).

The first 21 residues, 1–21, serve as a signal peptide directing secretion; it reads MKKKKIFIGTIISCVMLALSA. Cysteine 22 carries the N-palmitoyl cysteine lipid modification. Cysteine 22 is lipidated: S-diacylglycerol cysteine. The PpiC domain maps to 132 to 222; the sequence is KPEMKVSHIL…YGYHIIKVTD (91 aa).

This sequence belongs to the PrsA family.

The protein localises to the cell membrane. The enzyme catalyses [protein]-peptidylproline (omega=180) = [protein]-peptidylproline (omega=0). Functionally, plays a major role in protein secretion by helping the post-translocational extracellular folding of several secreted proteins. The chain is Foldase protein PrsA 3 (prsA3) from Bacillus cereus (strain ATCC 14579 / DSM 31 / CCUG 7414 / JCM 2152 / NBRC 15305 / NCIMB 9373 / NCTC 2599 / NRRL B-3711).